Reading from the N-terminus, the 91-residue chain is DNA-directed RNA polymerase subunit omega (91 aa).

Belongs to the RNA polymerase subunit omega family. As to quaternary structure, the RNAP catalytic core consists of 2 alpha, 1 beta, 1 beta' and 1 omega subunit. When a sigma factor is associated with the core the holoenzyme is formed, which can initiate transcription.

It carries out the reaction RNA(n) + a ribonucleoside 5'-triphosphate = RNA(n+1) + diphosphate. Its function is as follows. Promotes RNA polymerase assembly. Latches the N- and C-terminal regions of the beta' subunit thereby facilitating its interaction with the beta and alpha subunits. The protein is DNA-directed RNA polymerase subunit omega of Yersinia pestis bv. Antiqua (strain Antiqua).